A 631-amino-acid polypeptide reads, in one-letter code: Interferon-induced GTP-binding protein Mx1 (631 aa).

The Dynamin-type G domain occupies 33-306 (DLALPAIAVI…LTSHICKSLP (274 aa)). The tract at residues 43 to 50 (GDQSSGKS) is G1 motif. Residue 43–50 (GDQSSGKS) participates in GTP binding. The interval 68–70 (VTR) is G2 motif. Positions 144–147 (DLPG) are G3 motif. GTP contacts are provided by residues 144 to 148 (DLPGI) and 213 to 216 (TKPD). The segment at 213-216 (TKPD) is G4 motif. The interval 245–248 (KCRG) is G5 motif. A bundle signaling element (BSE) region spans residues 307–332 (LLEDQINSSHQSASEELQKYGADIPE). Residues 332–499 (EDDRTRMSFL…HFQMEQIVYC (168 aa)) form a middle domain region. The interval 333–601 (DDRTRMSFLV…TSKCSWFLEE (269 aa)) is stalk. The segment at 520–522 (KTK) is critical for lipid-binding. The 89-residue stretch at 543-631 (TTEMTQHLKA…ARQKLAKFSD (89 aa)) folds into the GED domain.

The protein belongs to the TRAFAC class dynamin-like GTPase superfamily. Dynamin/Fzo/YdjA family. Homooligomer. Oligomerizes into multimeric filamentous or ring-like structures by virtue of its stalk domain. Oligomerization is critical for GTPase activity, protein stability, and recognition of viral target structures. Interacts with TRPC1, TRPC3, TRPC4, TRPC5, TRPC6 and TRPC7. Interacts with HSPA5. Interacts with TUBB/TUBB5. Interacts with DDX39A and DDX39B. Post-translationally, ISGylated.

The protein resides in the cytoplasm. It localises to the nucleus. It is found in the endoplasmic reticulum membrane. The protein localises to the perinuclear region. Functionally, interferon-induced dynamin-like GTPase with antiviral activity against influenza A virus, (IAV), influenza B virus (IBV) and Thogoto virus (THOV). Inhibits FLUAV by interfering with the process of primary transcription, probably by affecting the viral polymerase function. The sequence is that of Interferon-induced GTP-binding protein Mx1 (Mx1) from Mus musculus (Mouse).